The chain runs to 942 residues: Lon protease homolog 4, chloroplastic/mitochondrial (942 aa).

Position 54 is a phosphoserine (Ser54). The Lon N-terminal domain maps to 79-301; sequence VIALPLPHKP…LTLELVKKEV (223 aa). Residue 456-463 participates in ATP binding; that stretch reads GPTGVGKT. The tract at residues 673-725 is disordered; sequence ISDDVTTDTEETKSLAKTDLESPETSAEGSTVLTDELATGDPTESTTEQSGEV. Basic and acidic residues predominate over residues 682 to 692; that stretch reads EETKSLAKTDL. The segment covering 695-705 has biased composition (polar residues); the sequence is PETSAEGSTVL. Positions 756 to 940 constitute a Lon proteolytic domain; it reads QTPVGVVMGL…EQIFELAFGY (185 aa). Residues Ser846 and Lys889 contribute to the active site.

The protein belongs to the peptidase S16 family. As to quaternary structure, homohexamer or homoheptamer. Organized in a ring with a central cavity.

Its subcellular location is the mitochondrion matrix. The protein localises to the plastid. The protein resides in the chloroplast thylakoid membrane. It carries out the reaction Hydrolysis of proteins in presence of ATP.. ATP-dependent serine protease that mediates the selective degradation of misfolded, unassembled or oxidatively damaged polypeptides as well as certain short-lived regulatory proteins in the mitochondrial matrix. May also have a chaperone function in the assembly of inner membrane protein complexes. Participates in the regulation of mitochondrial gene expression and in the maintenance of the integrity of the mitochondrial genome. Binds to mitochondrial DNA in a site-specific manner. This is Lon protease homolog 4, chloroplastic/mitochondrial (LON4) from Arabidopsis thaliana (Mouse-ear cress).